The sequence spans 250 residues: Small ribosomal subunit protein uS3 (250 aa).

The KH type-2 domain maps to 39-107 (VREFLTKKLK…PAQVSINEID (69 aa)). The segment at 215-250 (MNPAPAEERPAKRGRGRGEGQERRGRRGDRAADKGE) is disordered. The segment covering 220–250 (AEERPAKRGRGRGEGQERRGRRGDRAADKGE) has biased composition (basic and acidic residues).

It belongs to the universal ribosomal protein uS3 family. As to quaternary structure, part of the 30S ribosomal subunit. Forms a tight complex with proteins S10 and S14.

Functionally, binds the lower part of the 30S subunit head. Binds mRNA in the 70S ribosome, positioning it for translation. In Acinetobacter baumannii (strain SDF), this protein is Small ribosomal subunit protein uS3.